Here is a 368-residue protein sequence, read N- to C-terminus: Phosphate acyltransferase (368 aa).

The segment at 335–368 (VSLGDGEHDAGGAGPASPAAGHHAEPSAAQSSKA) is disordered. Residues 349–368 (PASPAAGHHAEPSAAQSSKA) show a composition bias toward low complexity.

It belongs to the PlsX family. As to quaternary structure, homodimer. Probably interacts with PlsY.

Its subcellular location is the cytoplasm. It carries out the reaction a fatty acyl-[ACP] + phosphate = an acyl phosphate + holo-[ACP]. It participates in lipid metabolism; phospholipid metabolism. Functionally, catalyzes the reversible formation of acyl-phosphate (acyl-PO(4)) from acyl-[acyl-carrier-protein] (acyl-ACP). This enzyme utilizes acyl-ACP as fatty acyl donor, but not acyl-CoA. The sequence is that of Phosphate acyltransferase from Burkholderia multivorans (strain ATCC 17616 / 249).